The sequence spans 283 residues: Interferon alpha-inducible protein 27-like protein 2B (283 aa).

Residues 1–90 (MKRKFVGAAI…AVGTATGARA (90 aa)) constitute a mitochondrion transit peptide. Residues 90–120 (AEGSMGASREQESGPQDPPQELQEPQEPPSC) form a disordered region. The next 3 helical transmembrane spans lie at 130–150 (FVGA…ALSA), 176–196 (GGGI…ILGL), and 202–222 (IILG…MGAC). The disordered stretch occupies residues 227-283 (PGLQDLQQEPKEPQEPQELQKQQEPQEPQELQKQQETQETQETQELQKTQEPPSYEK). Residues 242–283 (PQELQKQQEPQEPQELQKQQETQETQETQELQKTQEPPSYEK) show a composition bias toward low complexity.

The protein belongs to the IFI6/IFI27 family. In terms of assembly, homooligomer. Interacts with BAK1. Interacts with BAX. Interacts with adenine nucleotide translocase.

The protein resides in the mitochondrion inner membrane. Functions in the intrinsic apoptotic signaling pathway and may have an interferon-induced antiviral activity. This is Interferon alpha-inducible protein 27-like protein 2B from Mus musculus (Mouse).